Here is a 150-residue protein sequence, read N- to C-terminus: Catabolic 3-dehydroquinase 2 (150 aa).

Tyr23 (proton acceptor) is an active-site residue. Asn74, His80, and Asp87 together coordinate substrate. The active-site Proton donor is the His100. Residues 101–102 and Arg111 contribute to the substrate site; that span reads IT.

Belongs to the type-II 3-dehydroquinase family. As to quaternary structure, homododecamer. Adopts a ring-like structure, composed of an arrangement of two hexameric rings stacked on top of one another.

The catalysed reaction is 3-dehydroquinate = 3-dehydroshikimate + H2O. It functions in the pathway aromatic compound metabolism; 3,4-dihydroxybenzoate biosynthesis; 3,4-dihydroxybenzoate from 3-dehydroquinate: step 1/2. Its function is as follows. Is involved in the catabolism of quinate. Allows the utilization of quinate as carbon source via the beta-ketoadipate pathway. This Aspergillus fumigatus (strain ATCC MYA-4609 / CBS 101355 / FGSC A1100 / Af293) (Neosartorya fumigata) protein is Catabolic 3-dehydroquinase 2.